Here is a 309-residue protein sequence, read N- to C-terminus: Protease HtpX homolog (309 aa).

The next 2 membrane-spanning stretches (helical) occupy residues 7 to 27 and 28 to 48; these read FILL…IGGP and TGML…YWNA. Residue H134 participates in Zn(2+) binding. E135 is a catalytic residue. Zn(2+) is bound at residue H138. 2 consecutive transmembrane segments (helical) span residues 149 to 169 and 177 to 197; these read VTAT…FFGG and PGGL…AMLV. E206 provides a ligand contact to Zn(2+). A disordered region spans residues 289–309; that stretch reads TRGRSGTAVPTGATGKSGPWG.

The protein belongs to the peptidase M48B family. It depends on Zn(2+) as a cofactor.

The protein localises to the cell inner membrane. This Caulobacter sp. (strain K31) protein is Protease HtpX homolog.